Consider the following 600-residue polypeptide: Integrator complex subunit 11 (600 aa).

Residues His-68, His-70, Asp-72, His-73, His-157, and Asp-178 each coordinate Zn(2+). Positions 68–73 (HFHLDH) match the HXHXDH motif motif. The active site involves Glu-203. Lys-381 participates in a covalent cross-link: Glycyl lysine isopeptide (Lys-Gly) (interchain with G-Cter in SUMO). Position 414 (His-414) interacts with Zn(2+). Glycyl lysine isopeptide (Lys-Gly) (interchain with G-Cter in SUMO) cross-links involve residues Lys-462 and Lys-475. The Nuclear localization signal signature appears at 469 to 479 (LLPEAKKPRLL).

It belongs to the metallo-beta-lactamase superfamily. RNA-metabolizing metallo-beta-lactamase-like family. INTS11 subfamily. In terms of assembly, component of the Integrator complex, composed of core subunits INTS1, INTS2, INTS3, INTS4, INTS5, INTS6, INTS7, INTS8, INTS9/RC74, INTS10, INTS11/CPSF3L, INTS12, INTS13, INTS14 and INTS15. The core complex associates with protein phosphatase 2A subunits PPP2CA and PPP2R1A, to form the Integrator-PP2A (INTAC) complex. INTS11 is part of the RNA endonuclease subcomplex, composed of INTS4, INTS9, INTS11 and inositol hexakisphosphate (InsP6). Interacts with WDR73; interaction is required for the assembly of the RNA endonuclease subcomplex in the cytoplasm. Interacts with BRAT1; interaction is required for the assembly of the RNA endonuclease subcomplex and inhibits the endonuclease activity of INTS11 before formation of mature integrator complex. Requires Zn(2+) as cofactor. Post-translationally, sumoylated; sumoylation regulates its subcellular location and is required for integrator complex integrity.

It is found in the nucleus. The protein localises to the cytoplasm. With respect to regulation, the RNA endonuclease activity is inhibited by BRAT1 that forms hyrogen bond and hydrophobic interactions with the active site. Its function is as follows. RNA endonuclease component of the integrator complex, a multiprotein complex that terminates RNA polymerase II (Pol II) transcription in the promoter-proximal region of genes. The integrator complex provides a quality checkpoint during transcription elongation by driving premature transcription termination of transcripts that are unfavorably configured for transcriptional elongation: the complex terminates transcription by (1) catalyzing dephosphorylation of the C-terminal domain (CTD) of Pol II subunit POLR2A/RPB1 and SUPT5H/SPT5, (2) degrading the exiting nascent RNA transcript via endonuclease activity and (3) promoting the release of Pol II from bound DNA. The integrator complex is also involved in terminating the synthesis of non-coding Pol II transcripts, such as enhancer RNAs (eRNAs), small nuclear RNAs (snRNAs), telomerase RNAs and long non-coding RNAs (lncRNAs). Within the integrator complex, INTS11 constitutes the RNA endonuclease subunit that degrades exiting nascent RNA transcripts. Mediates recruitment of cytoplasmic dynein to the nuclear envelope, probably as component of the integrator complex. This is Integrator complex subunit 11 (Ints11) from Rattus norvegicus (Rat).